The primary structure comprises 359 residues: Probable 2-oxoacid dependent dioxygenase (359 aa).

The region spanning 207 to 308 (KGLWMLCHCF…ISVACFFVHT (102 aa)) is the Fe2OG dioxygenase domain. Residues His-231, Asp-233, and His-287 each contribute to the Fe cation site. Residues 329-359 (PPKYRDTTSESSNHYVARKPNGNSSLDHLRI) are disordered. Residues 349 to 359 (NGNSSLDHLRI) are compositionally biased toward polar residues.

It belongs to the iron/ascorbate-dependent oxidoreductase family. Requires Fe(2+) as cofactor. Expressed in leaves and seeds. All cultivars with seed-only-functional allele have low to non-detectable GSL-OH expression in the leaves.

The catalysed reaction is gluconapin + AH2 + O2 = progoitrin + A + H2O. Necessary for the hydroxylation of but-3-enyl glucosinolate to 2-hydroxybut-3-enyl glucosinolate, which is toxic to insects, bacteria and nematodes, inhibits seed germination and produces bitter flavors. The protein is Probable 2-oxoacid dependent dioxygenase of Arabidopsis thaliana (Mouse-ear cress).